The sequence spans 308 residues: Taste receptor type 2 member 46 (308 aa).

A topological domain (extracellular) is located at residue Met1. Residues 2–22 (ITFLSITFSILVGVIFVIGNF) form a helical membrane-spanning segment. The Cytoplasmic portion of the chain corresponds to 23-46 (ANGFIALVNSIEWVKRQKISFADQ). Residues 47 to 67 (ILTGLAVSRVGLLWVLLLHLY) form a helical membrane-spanning segment. The Extracellular portion of the chain corresponds to 68-86 (ATEFNLAFYSVEVRITAYN). The helical transmembrane segment at 87 to 107 (VWIVTNHFSNWLSTSLSMFYL) threads the bilayer. Residues 108-126 (LKIATFSNLIFLHLKRKVK) lie on the Cytoplasmic side of the membrane. The chain crosses the membrane as a helical span at residues 127 to 147 (SVILVTLLGPLLFLVCHLFVM). The Extracellular segment spans residues 148-178 (NMNHIVWRKEYEGNITWRIKLRSAMYLSNVT). N-linked (GlcNAc...) asparagine glycosylation is found at Asn161 and Asn176. A helical transmembrane segment spans residues 179–199 (VTMLANLIPLTLTLMSFLLLI). Topologically, residues 200 to 229 (CSLCKHLKKMQVHGKGSQDPSTKVHIKALQ) are cytoplasmic. The chain crosses the membrane as a helical span at residues 230 to 250 (TVTSFLLLCAIYFLSMILSVW). Topologically, residues 251–258 (NFELEKKP) are extracellular. A helical transmembrane segment spans residues 259–279 (VFMFCQAVIFSYPSTHPLILI). Residues 280–308 (WGNKKLKQIFLSVLWNVRYWVKGQKPSSP) are Cytoplasmic-facing.

Belongs to the G-protein coupled receptor T2R family.

It is found in the membrane. It localises to the cell projection. The protein localises to the cilium membrane. Receptor that may play a role in the perception of bitterness and is gustducin-linked. May play a role in sensing the chemical composition of the gastrointestinal content. The activity of this receptor may stimulate alpha gustducin, mediate PLC-beta-2 activation and lead to the gating of TRPM5. In airway epithelial cells, binding of bitter compounds increases the intracellular calcium ion concentration and stimulates ciliary beat frequency. This is Taste receptor type 2 member 46 (TAS2R46) from Macaca mulatta (Rhesus macaque).